The sequence spans 555 residues: Urocanate hydratase (555 aa).

NAD(+) is bound by residues G51–G52, Q129, G175–G177, E195, Q262–H266, Y272–L273, and Y321. The active site involves C409. Residue G491 participates in NAD(+) binding.

This sequence belongs to the urocanase family. Requires NAD(+) as cofactor.

It localises to the cytoplasm. The enzyme catalyses 4-imidazolone-5-propanoate = trans-urocanate + H2O. The protein operates within amino-acid degradation; L-histidine degradation into L-glutamate; N-formimidoyl-L-glutamate from L-histidine: step 2/3. Catalyzes the conversion of urocanate to 4-imidazolone-5-propionate. This chain is Urocanate hydratase, found in Stenotrophomonas maltophilia (strain R551-3).